The following is a 481-amino-acid chain: Beta-amyrin 28-monooxygenase (481 aa).

The chain crosses the membrane as a helical span at residues 4–24 (FYVPLLSLFVLFISLSFHFLF). Cys-428 provides a ligand contact to heme.

It belongs to the cytochrome P450 family. Heme serves as cofactor. Mostly expressed in roots, and, to a lower extent, in stems and leaves. Accumulates only in the rhizome of plants.

The protein localises to the membrane. The enzyme catalyses beta-amyrin + 3 reduced [NADPH--hemoprotein reductase] + 3 O2 = oleanolate + 3 oxidized [NADPH--hemoprotein reductase] + 4 H2O + 4 H(+). Its pathway is secondary metabolite biosynthesis; terpenoid biosynthesis. Functionally, component of the oleanane-type triterpene saponins (e.g. ginsenosides or panaxosides) biosynthetic pathway. Catalyzes the carboxylation of beta-amyrin at the C-28 position to form oleanolic acid during ginsenoside biosynthesis, a class of tetracyclic triterpenoid saponins. This Panax ginseng (Korean ginseng) protein is Beta-amyrin 28-monooxygenase.